The chain runs to 98 residues: NADH-ubiquinone oxidoreductase chain 4L (98 aa).

A run of 3 helical transmembrane segments spans residues 1–21, 29–49, and 61–81; these read MTLI…GLLM, ALLC…LTIL, and IILL…LVMV.

The protein belongs to the complex I subunit 4L family. Core subunit of respiratory chain NADH dehydrogenase (Complex I) which is composed of 45 different subunits.

Its subcellular location is the mitochondrion inner membrane. The enzyme catalyses a ubiquinone + NADH + 5 H(+)(in) = a ubiquinol + NAD(+) + 4 H(+)(out). Core subunit of the mitochondrial membrane respiratory chain NADH dehydrogenase (Complex I) which catalyzes electron transfer from NADH through the respiratory chain, using ubiquinone as an electron acceptor. Part of the enzyme membrane arm which is embedded in the lipid bilayer and involved in proton translocation. This chain is NADH-ubiquinone oxidoreductase chain 4L (MT-ND4L), found in Eschrichtius robustus (California gray whale).